Reading from the N-terminus, the 393-residue chain is Uroporphyrinogen decarboxylase, chloroplastic (393 aa).

The disordered stretch occupies residues 1–64 (MATACPPLSL…AGERNQREEV (64 aa)). Over residues 23–37 (AGPNAGSSRPSAAAP) the composition is skewed to low complexity. Over residues 38-50 (SERRSWRRPRPDG) the composition is skewed to basic and acidic residues. Substrate is bound by residues 73–77 (RQAGR), phenylalanine 92, serine 122, aspartate 123, tyrosine 200, serine 255, and histidine 370.

The protein belongs to the uroporphyrinogen decarboxylase family. As to quaternary structure, homodimer.

It localises to the plastid. It is found in the chloroplast. It catalyses the reaction uroporphyrinogen III + 4 H(+) = coproporphyrinogen III + 4 CO2. Its pathway is porphyrin-containing compound metabolism; protoporphyrin-IX biosynthesis; coproporphyrinogen-III from 5-aminolevulinate: step 4/4. Functionally, catalyzes the decarboxylation of four acetate groups of uroporphyrinogen-III to yield coproporphyrinogen-III. In Zea mays (Maize), this protein is Uroporphyrinogen decarboxylase, chloroplastic (LES22).